Reading from the N-terminus, the 322-residue chain is MPFHIGSGCLPAIISNRRIYRIAWSDTPPEMSSWEKMKEFFCSTHQAEALECIWTICHPPAGTTREDVVSRFELLRTLAYDGWEENIHSGLHGENYFCILDEDSQEILSVTLDDVGNYTVNCQGYSETHHLTMATEPGVERTDITYNLTSDIDAAAYLEELKQNPIINNKIMNPVGQCESLMTPVSNFMNEKGFDNIRYRGIFIWDKPTEEIPTNHFAVVGNKEGKDYVFDVSAHQFENRGMSNLNGPLILSADEWVCKYRMATRRKLIYYTDFSNSSIAANAYDALPRELESESMAGKVFVTSPRWFNTFKKQKYSLIGKM.

Interacts with host IQGAP1 and host TRIP6 (thyroid receptor-interacting protein 6).

Its subcellular location is the secreted. The protein localises to the host cytoplasm. Effector proteins function to alter host cell physiology and promote bacterial survival in host tissues. This protein is required to maintain a long-term chronic systemic infection in mice. It inhibits normal cell migration of primary macrophages and dendritic cells, by a mechanism that involves interaction with the host factor IQGAP1, an important regulator of the cytoskeleton and cell migration. Also accelerates the systemic spread of infection from the gastrointestinal tract to the bloodstream, probably by interacting with host TRIP6. The protein is Secreted effector protein SseI (sseI) of Salmonella typhimurium (strain LT2 / SGSC1412 / ATCC 700720).